The primary structure comprises 363 residues: MPEKTIVVLPGDHVGTEITAEAIKVLKAIEEVKPEIKFNFQHHLIGGAAIDATGVPLPDDALEASKKADAVLLGAVGGPKWGTGAVRPEQGLLKIRKELNLYANLRPCNFASESLLDLSPIKAEVVKGTDFVVVRELVGGIYFGERKEDDGSGVASDTETYSVPEVQRITRMAAFMALQHNPPLPIWSLDKANVLASSRLWRKVVTETIEKEFPQLTVQHQLIDSAAMILIKYPTQLNGIVITSNMFGDIISDEASVIPGSLGLLPSASLASLPDSNKAFGLYEPCHGSAPDLPANKVNPIATILSAAMMLKLSLDLYEEGVAVETAVKQVLDAGIRTGDLKGTNSTTEVGDAVAEAVKKILA.

78 to 89 (GPKWGTGAVRPE) contacts NAD(+). Substrate-binding residues include arginine 96, arginine 106, arginine 135, and aspartate 224. Positions 224, 249, and 253 each coordinate Mg(2+). 288-299 (GSAPDLPANKVN) contributes to the NAD(+) binding site.

It belongs to the isocitrate and isopropylmalate dehydrogenases family. As to quaternary structure, homodimer. The cofactor is Mg(2+). Mn(2+) is required as a cofactor.

The protein resides in the cytoplasm. The enzyme catalyses (2R,3S)-3-isopropylmalate + NAD(+) = 4-methyl-2-oxopentanoate + CO2 + NADH. Its pathway is amino-acid biosynthesis; L-leucine biosynthesis; L-leucine from 3-methyl-2-oxobutanoate: step 3/4. Catalyzes the oxidation of 3-carboxy-2-hydroxy-4-methylpentanoate (3-isopropylmalate) to 3-carboxy-4-methyl-2-oxopentanoate. The product decarboxylates to 4-methyl-2 oxopentanoate. This Cyberlindnera jadinii (Torula yeast) protein is 3-isopropylmalate dehydrogenase (LEU2).